The chain runs to 297 residues: 4-diphosphocytidyl-2-C-methyl-D-erythritol kinase (297 aa).

Lys6 is a catalytic residue. Residue 94–104 (PVAGGMAGGSA) participates in ATP binding. Residue Asp136 is part of the active site.

Belongs to the GHMP kinase family. IspE subfamily.

The enzyme catalyses 4-CDP-2-C-methyl-D-erythritol + ATP = 4-CDP-2-C-methyl-D-erythritol 2-phosphate + ADP + H(+). The protein operates within isoprenoid biosynthesis; isopentenyl diphosphate biosynthesis via DXP pathway; isopentenyl diphosphate from 1-deoxy-D-xylulose 5-phosphate: step 3/6. Functionally, catalyzes the phosphorylation of the position 2 hydroxy group of 4-diphosphocytidyl-2C-methyl-D-erythritol. This chain is 4-diphosphocytidyl-2-C-methyl-D-erythritol kinase, found in Nocardioides sp. (strain ATCC BAA-499 / JS614).